Consider the following 372-residue polypeptide: 4-hydroxy-3-methylbut-2-en-1-yl diphosphate synthase (flavodoxin) (372 aa).

Residues C270, C273, C305, and E312 each contribute to the [4Fe-4S] cluster site.

Belongs to the IspG family. The cofactor is [4Fe-4S] cluster.

It carries out the reaction (2E)-4-hydroxy-3-methylbut-2-enyl diphosphate + oxidized [flavodoxin] + H2O + 2 H(+) = 2-C-methyl-D-erythritol 2,4-cyclic diphosphate + reduced [flavodoxin]. The protein operates within isoprenoid biosynthesis; isopentenyl diphosphate biosynthesis via DXP pathway; isopentenyl diphosphate from 1-deoxy-D-xylulose 5-phosphate: step 5/6. Converts 2C-methyl-D-erythritol 2,4-cyclodiphosphate (ME-2,4cPP) into 1-hydroxy-2-methyl-2-(E)-butenyl 4-diphosphate. This chain is 4-hydroxy-3-methylbut-2-en-1-yl diphosphate synthase (flavodoxin), found in Enterobacter sp. (strain 638).